The following is a 724-amino-acid chain: Methionine--tRNA ligase (724 aa).

Residues Pro11–His21 carry the 'HIGH' region motif. Cys143, Cys146, Cys156, and Cys159 together coordinate Zn(2+). The short motif at Lys344–Ser348 is the 'KMSKS' region element. Thr347 is a binding site for ATP. In terms of domain architecture, tRNA-binding spans Glu624 to Arg724.

This sequence belongs to the class-I aminoacyl-tRNA synthetase family. MetG type 1 subfamily. As to quaternary structure, homodimer. Requires Zn(2+) as cofactor.

It localises to the cytoplasm. The catalysed reaction is tRNA(Met) + L-methionine + ATP = L-methionyl-tRNA(Met) + AMP + diphosphate. Is required not only for elongation of protein synthesis but also for the initiation of all mRNA translation through initiator tRNA(fMet) aminoacylation. In Pyrococcus furiosus (strain ATCC 43587 / DSM 3638 / JCM 8422 / Vc1), this protein is Methionine--tRNA ligase.